Consider the following 542-residue polypeptide: Phosphoenolpyruvate carboxykinase (ATP) (542 aa).

Positions 67, 208, and 214 each coordinate substrate. ATP is bound by residues Lys214, His233, and 249–257; that span reads GLSGTGKTT. Mn(2+) is bound by residues Lys214 and His233. Mn(2+) is bound at residue Asp270. ATP is bound by residues Glu298, Arg334, 450–451, and Thr456; that span reads RI. A substrate-binding site is contributed by Arg334.

Belongs to the phosphoenolpyruvate carboxykinase (ATP) family. Monomer. Mn(2+) is required as a cofactor.

The protein resides in the cytoplasm. The catalysed reaction is oxaloacetate + ATP = phosphoenolpyruvate + ADP + CO2. It participates in carbohydrate biosynthesis; gluconeogenesis. In terms of biological role, involved in the gluconeogenesis. Catalyzes the conversion of oxaloacetate (OAA) to phosphoenolpyruvate (PEP) through direct phosphoryl transfer between the nucleoside triphosphate and OAA. This is Phosphoenolpyruvate carboxykinase (ATP) from Vibrio campbellii (strain ATCC BAA-1116).